An 89-amino-acid polypeptide reads, in one-letter code: Small ribosomal subunit protein uS15 (89 aa).

The protein belongs to the universal ribosomal protein uS15 family. As to quaternary structure, part of the 30S ribosomal subunit. Forms a bridge to the 50S subunit in the 70S ribosome, contacting the 23S rRNA.

Functionally, one of the primary rRNA binding proteins, it binds directly to 16S rRNA where it helps nucleate assembly of the platform of the 30S subunit by binding and bridging several RNA helices of the 16S rRNA. In terms of biological role, forms an intersubunit bridge (bridge B4) with the 23S rRNA of the 50S subunit in the ribosome. The sequence is that of Small ribosomal subunit protein uS15 from Chlamydia abortus (strain DSM 27085 / S26/3) (Chlamydophila abortus).